Reading from the N-terminus, the 343-residue chain is MSHQTGIRANEQLAKVFGKAKNGKFRVIKVSIENEQLSCGATAETKKDWERDYDKLIGPLLEKDVPCYILYRLDAKIPLGYSWLLISWTPDTASIRQKMVYASTKATLKTEFGSAYITEELHATTLDECTLEGYRRHKQDFAAPAPLTSREEELKELRKTEVHTEINTNTRHQTLGGINCPLSEATVAAVQDLVRGKHDYLQFRIDLEEEQIHVSRAAKVELADLPKQVPEDHARYHLFLFRHTHEGDYFESYVFVYSMPGYSCSVRERMMYSSCKAPFLDELAALGVEVVKKLEIDSGSELTEAFLQDELHPKKILHRPAFAKPKGPPNRGAKRLTRPTAED.

2 ADF-H domains span residues 11 to 135 (EQLA…EGYR) and 184 to 312 (EATV…DELH). Positions 319-343 (RPAFAKPKGPPNRGAKRLTRPTAED) are disordered.

It belongs to the actin-binding proteins ADF family. Twinfilin subfamily. In terms of assembly, interacts with G-actin; ADP-actin form.

It localises to the cytoplasm. Its subcellular location is the cytoskeleton. The protein localises to the cell cortex. In terms of biological role, actin-binding protein involved in motile and morphological processes. Inhibits actin polymerization, likely by sequestering G-actin. This is Twinfilin (twf) from Drosophila melanogaster (Fruit fly).